The sequence spans 106 residues: Prothymosin alpha-B (106 aa).

Over residues 1-39 (MADAKVDSATEISAKDLKEKKLIEEKENGKDATNGKENE) the composition is skewed to basic and acidic residues. Residues 1–106 (MADAKVDSAT…DVDPKKQKVN (106 aa)) form a disordered region. Ser-8 carries the phosphoserine modification. At Thr-10 the chain carries Phosphothreonine. Acidic residues-rich tracts occupy residues 40–76 (ENGE…DEDL) and 85–98 (DDDE…EDDV).

Belongs to the pro/parathymosin family. Uniformly expressed in all embryonic cells at 4 and 8 hpf. At the 20-somite stage (18 hpf), ubiquitously expressed in the developing nervous system, in the tail bud and in the pronephric ducts. Also expressed in some placodes, including the anterior lateral line placode, otic vesicle and olfactory placode. At 27 hpf, strong expression persists in the central nervous system and the olfactory placode. Expressed strongly in the eyes and the pectoral fin buds. In the tail region, expressed in the spinal cord, in the posterior lateral line precursors, and persists in the pronephric ducts. At 48 hpf, expressed in all head territories including the developing brain, eyes, and pharyngeal arches. More caudally, expression persists in the pectoral fin buds, the spinal cord and, for the first time, appears in the intestine. At 72 hpf, expressed only in restricted regions of the brain, in pharyngeal arches region and in the amacrine cells and the horizontal cells of the retina.

The protein localises to the nucleus. This Danio rerio (Zebrafish) protein is Prothymosin alpha-B.